We begin with the raw amino-acid sequence, 534 residues long: Probable RNA-binding protein 46 (534 aa).

RRM domains follow at residues 61–139, 141–223, and 236–308; these read CEVF…VSLD, CRLF…WASP, and KVLY…LAKP.

It is found in the cytoplasm. Functionally, essential for male and female fertility, playing a crucial role in regulating germ cell development by ensuring the proper progression of meiosis prophase I. This is Probable RNA-binding protein 46 (rbm46) from Xenopus tropicalis (Western clawed frog).